We begin with the raw amino-acid sequence, 115 residues long: U3-lycotoxin-Ls1a (115 aa).

Positions 1 to 20 (MKFVLLFGVLLVTLFSYSSA) are cleaved as a signal peptide. The propeptide occupies 21–44 (EMLDDFDQADEDELLSSIEKEEAR). Cystine bridges form between cysteine 48/cysteine 63, cysteine 55/cysteine 72, cysteine 62/cysteine 87, and cysteine 74/cysteine 85.

Belongs to the neurotoxin 19 (CSTX) family. 01 subfamily. Expressed by the venom gland.

The protein localises to the secreted. In Lycosa singoriensis (Wolf spider), this protein is U3-lycotoxin-Ls1a.